Here is a 162-residue protein sequence, read N- to C-terminus: Photosystem II extrinsic protein V (162 aa).

Residues 1–25 form the signal peptide; it reads MFKKFSALFTLLFTLCLVNPMLVYS. Heme c-binding residues include Cys62, Cys65, His66, and His117.

It belongs to the cytochrome c family. PsbV subfamily. As to quaternary structure, PSII is composed of 1 copy each of membrane proteins PsbA, PsbB, PsbC, PsbD, PsbE, PsbF, PsbH, PsbI, PsbJ, PsbK, PsbL, PsbM, PsbT, PsbX, PsbY, PsbZ, Psb30/Ycf12, at least 3 peripheral proteins of the oxygen-evolving complex and a large number of cofactors. It forms dimeric complexes. The cofactor is heme c.

It is found in the plastid. The protein resides in the chloroplast thylakoid membrane. One of the extrinsic, lumenal subunits of photosystem II (PSII). PSII is a light-driven water plastoquinone oxidoreductase, using light energy to abstract electrons from H(2)O, generating a proton gradient subsequently used for ATP formation. The extrinsic proteins stabilize the structure of photosystem II oxygen-evolving complex (OEC), the ion environment of oxygen evolution and protect the OEC against heat-induced inactivation. The protein is Photosystem II extrinsic protein V of Guillardia theta (Cryptophyte).